The following is an 827-amino-acid chain: Rho GTPase-activating protein 6 (827 aa).

The 108-residue stretch at threonine 18–alanine 125 folds into the PH domain. The Rho-GAP domain maps to leucine 172–isoleucine 371. Disordered regions lie at residues cysteine 379–alanine 437 and tyrosine 517–asparagine 561. Basic and acidic residues predominate over residues isoleucine 401–aspartate 412. Residues isoleucine 413 to aspartate 423 show a composition bias toward acidic residues. A compositionally biased stretch (polar residues) spans tyrosine 517–glycine 543. The stretch at glycine 560–histidine 684 forms a coiled coil.

Acts as a GTPase activator for the Rac-type GTPase by converting it to an inactive GDP-bound state. This Arabidopsis thaliana (Mouse-ear cress) protein is Rho GTPase-activating protein 6 (ROPGAP6).